A 293-amino-acid chain; its full sequence is EID1-like F-box protein 1 (293 aa).

The region spanning 16–68 (QCTKGHLNEDVLLLVFQHLNWNPKLVATLSCVCRWFDDFAKRVLWKEFCKTRA) is the F-box domain. Residues 245–293 (AIPSEDNNHTEKKQDNGFPRENVLKRRNSLLGGSENGPPPQKRLTNPNQ) are disordered. Residues 250–259 (DNNHTEKKQD) are compositionally biased toward basic and acidic residues.

In Arabidopsis thaliana (Mouse-ear cress), this protein is EID1-like F-box protein 1 (EDL1).